A 218-amino-acid polypeptide reads, in one-letter code: Claudin-3 (218 aa).

Over 1–8 (MSMGLEIA) the chain is Cytoplasmic. The helical transmembrane segment at 9-29 (GTSLAVLGWLSTIVCCALPMW) threads the bilayer. Topologically, residues 30–80 (RVTAFIGSSIITAQITWEGLWMNCVVQSTGQMQCKVYDSLLALPQDLQAAR) are extracellular. A helical transmembrane segment spans residues 81–101 (ALIVVSILLAAFGLLVALVGA). Over 102-115 (QCTNCVQDDTAKAK) the chain is Cytoplasmic. Residues 116 to 136 (ITIVAGVLFLLAALLTLVPVS) form a helical membrane-spanning segment. Residues 137-159 (WSANTIIRDFYNPLVPDAQKREM) are Extracellular-facing. A helical membrane pass occupies residues 160-180 (GAGLYVGWAAAALQLLGGALL). Residues 181–218 (CCSCPPRDKKYAPTKIVYSAPRSAGPGTSTAYDRKDYV) are Cytoplasmic-facing. Y198 is modified (phosphotyrosine). 2 positions are modified to phosphoserine: S199 and S209. Residues 217-218 (YV) form an interactions with TJP1, TJP2 and TJP3 region.

It belongs to the claudin family. In terms of assembly, can form homo- and heteropolymers with other CLDN. Homopolymers interact with CLDN1 and CLDN2 homopolymers. Interacts in cis (within the same plasma membrane) with CLDN19. Directly interacts with TJP1/ZO-1, TJP2/ZO-2 and TJP3/ZO-3.

The protein localises to the cell junction. The protein resides in the tight junction. It is found in the cell membrane. Its function is as follows. Plays a major role in tight junction-specific obliteration of the intercellular space, through calcium-independent cell-adhesion activity. This chain is Claudin-3 (CLDN3), found in Canis lupus familiaris (Dog).